A 508-amino-acid polypeptide reads, in one-letter code: Maturase K (508 aa).

It belongs to the intron maturase 2 family. MatK subfamily.

The protein localises to the plastid. Its subcellular location is the chloroplast. In terms of biological role, usually encoded in the trnK tRNA gene intron. Probably assists in splicing its own and other chloroplast group II introns. This chain is Maturase K, found in Ranunculus trichophyllus (Whitewater crowfoot).